The sequence spans 508 residues: Protein FAM227B (508 aa).

Disordered stretches follow at residues 1-22 and 485-508; these read MAGQ…MQEP and ASLS…EEEY. A compositionally biased stretch (low complexity) spans 486-497; it reads SLSSSSSSSPSS.

This sequence belongs to the FAM227 family.

In Homo sapiens (Human), this protein is Protein FAM227B (FAM227B).